We begin with the raw amino-acid sequence, 280 residues long: UDP-3-O-acyl-N-acetylglucosamine deacetylase (280 aa).

Zn(2+) contacts are provided by histidine 79, histidine 237, and aspartate 241. Catalysis depends on histidine 264, which acts as the Proton donor.

The protein belongs to the LpxC family. Zn(2+) serves as cofactor.

The catalysed reaction is a UDP-3-O-[(3R)-3-hydroxyacyl]-N-acetyl-alpha-D-glucosamine + H2O = a UDP-3-O-[(3R)-3-hydroxyacyl]-alpha-D-glucosamine + acetate. Its pathway is glycolipid biosynthesis; lipid IV(A) biosynthesis; lipid IV(A) from (3R)-3-hydroxytetradecanoyl-[acyl-carrier-protein] and UDP-N-acetyl-alpha-D-glucosamine: step 2/6. Its function is as follows. Catalyzes the hydrolysis of UDP-3-O-myristoyl-N-acetylglucosamine to form UDP-3-O-myristoylglucosamine and acetate, the committed step in lipid A biosynthesis. This chain is UDP-3-O-acyl-N-acetylglucosamine deacetylase, found in Chlamydia caviae (strain ATCC VR-813 / DSM 19441 / 03DC25 / GPIC) (Chlamydophila caviae).